The following is a 417-amino-acid chain: Serine hydroxymethyltransferase (417 aa).

(6S)-5,6,7,8-tetrahydrofolate contacts are provided by residues L122 and 126–128 (GHL). Position 230 is an N6-(pyridoxal phosphate)lysine (K230). 355 to 357 (SPF) contributes to the (6S)-5,6,7,8-tetrahydrofolate binding site.

The protein belongs to the SHMT family. In terms of assembly, homodimer. It depends on pyridoxal 5'-phosphate as a cofactor.

Its subcellular location is the cytoplasm. The catalysed reaction is (6R)-5,10-methylene-5,6,7,8-tetrahydrofolate + glycine + H2O = (6S)-5,6,7,8-tetrahydrofolate + L-serine. It functions in the pathway one-carbon metabolism; tetrahydrofolate interconversion. It participates in amino-acid biosynthesis; glycine biosynthesis; glycine from L-serine: step 1/1. Functionally, catalyzes the reversible interconversion of serine and glycine with tetrahydrofolate (THF) serving as the one-carbon carrier. This reaction serves as the major source of one-carbon groups required for the biosynthesis of purines, thymidylate, methionine, and other important biomolecules. Also exhibits THF-independent aldolase activity toward beta-hydroxyamino acids, producing glycine and aldehydes, via a retro-aldol mechanism. The protein is Serine hydroxymethyltransferase of Francisella tularensis subsp. holarctica (strain LVS).